A 238-amino-acid chain; its full sequence is RxLR effector protein PITG_14788 (238 aa).

The N-terminal stretch at 1 to 23 (MKSLHAVNLVLLLLLACFAPAPA) is a signal peptide. The short motif at 47–65 (RLLRAHSSGKEEQKEEEER) is the RxLR-dEER element.

It belongs to the RxLR effector family.

The protein resides in the secreted. Its subcellular location is the host cytoplasm. The protein localises to the host cytoskeleton. It localises to the host nucleus. It is found in the host nucleolus. In terms of biological role, effector that enhances P.infestans colonization of Nicotiana benthamiana leaves. The polypeptide is RxLR effector protein PITG_14788 (Phytophthora infestans (strain T30-4) (Potato late blight agent)).